The following is a 356-amino-acid chain: Histidinol-phosphate aminotransferase (356 aa).

K208 carries the N6-(pyridoxal phosphate)lysine modification.

The protein belongs to the class-II pyridoxal-phosphate-dependent aminotransferase family. Histidinol-phosphate aminotransferase subfamily. Homodimer. Pyridoxal 5'-phosphate is required as a cofactor.

The catalysed reaction is L-histidinol phosphate + 2-oxoglutarate = 3-(imidazol-4-yl)-2-oxopropyl phosphate + L-glutamate. It functions in the pathway amino-acid biosynthesis; L-histidine biosynthesis; L-histidine from 5-phospho-alpha-D-ribose 1-diphosphate: step 7/9. The sequence is that of Histidinol-phosphate aminotransferase from Lactococcus lactis subsp. cremoris (strain MG1363).